Reading from the N-terminus, the 231-residue chain is Transmembrane gamma-carboxyglutamic acid protein 3 (231 aa).

The propeptide occupies 1–19 (MAVFLEAKDAHSVLKRFPR). The Gla domain maps to 20-65 (ANEFLEELRQGTIERECMEEICSYEEVKEVFENKEKTMEFWKGYPN). Residues 20-78 (ANEFLEELRQGTIERECMEEICSYEEVKEVFENKEKTMEFWKGYPNAVYSVRDPSQSSD) lie on the Extracellular side of the membrane. A 4-carboxyglutamate mark is found at Glu22, Glu25, Glu26, Glu33, Glu35, Glu38, Glu39, Glu44, Glu45, Glu48, Glu51, Glu54, and Glu58. A disulfide bond links Cys36 and Cys41. Residues 79–101 (AMYVVVPLLGVALLIVIALFIIW) form a helical membrane-spanning segment. The Cytoplasmic segment spans residues 102 to 231 (RCQLQKATRH…IVAANPGADK (130 aa)). Disordered stretches follow at residues 140 to 165 (HSQG…SRGG) and 182 to 231 (LSRL…GADK). Residues 202–213 (ESSSEEASVSYS) show a composition bias toward low complexity.

In terms of processing, gla residues are produced after subsequent post-translational modifications of glutamate by a vitamin K-dependent gamma-carboxylase. Expressed in brain, lung, kidney and heart.

The protein resides in the membrane. The polypeptide is Transmembrane gamma-carboxyglutamic acid protein 3 (PRRG3) (Homo sapiens (Human)).